A 158-amino-acid polypeptide reads, in one-letter code: NADH-quinone oxidoreductase subunit B (158 aa).

[4Fe-4S] cluster is bound by residues C37, C38, C102, and C132.

Belongs to the complex I 20 kDa subunit family. In terms of assembly, NDH-1 is composed of 14 different subunits. Subunits NuoB, C, D, E, F, and G constitute the peripheral sector of the complex. The cofactor is [4Fe-4S] cluster.

It localises to the cell inner membrane. The catalysed reaction is a quinone + NADH + 5 H(+)(in) = a quinol + NAD(+) + 4 H(+)(out). Functionally, NDH-1 shuttles electrons from NADH, via FMN and iron-sulfur (Fe-S) centers, to quinones in the respiratory chain. Couples the redox reaction to proton translocation (for every two electrons transferred, four hydrogen ions are translocated across the cytoplasmic membrane), and thus conserves the redox energy in a proton gradient. The sequence is that of NADH-quinone oxidoreductase subunit B from Bordetella parapertussis (strain 12822 / ATCC BAA-587 / NCTC 13253).